The following is a 143-amino-acid chain: Transcriptional regulator MraZ (143 aa).

SpoVT-AbrB domains lie at 5–47 and 76–119; these read EYEH…TLEE and AVEV…DRAS.

It belongs to the MraZ family. Forms oligomers.

The protein localises to the cytoplasm. It is found in the nucleoid. The protein is Transcriptional regulator MraZ of Staphylococcus carnosus (strain TM300).